We begin with the raw amino-acid sequence, 95 residues long: Citrate lyase acyl carrier protein (95 aa).

Residue Ser-14 is modified to O-(phosphoribosyl dephospho-coenzyme A)serine.

The protein belongs to the CitD family. Oligomer with a subunit composition of (alpha,beta,gamma)6.

The protein localises to the cytoplasm. Its function is as follows. Covalent carrier of the coenzyme of citrate lyase. The protein is Citrate lyase acyl carrier protein of Haemophilus influenzae (strain ATCC 51907 / DSM 11121 / KW20 / Rd).